Reading from the N-terminus, the 391-residue chain is Processive diacylglycerol beta-glucosyltransferase (391 aa).

Belongs to the glycosyltransferase 28 family. UgtP subfamily.

The protein resides in the cell membrane. The enzyme catalyses a 1,2-diacyl-3-O-(beta-D-glucopyranosyl)-sn-glycerol + UDP-alpha-D-glucose = a 1,2-diacyl-3-O-(beta-D-Glc-(1-&gt;6)-beta-D-Glc)-sn-glycerol + UDP + H(+). The catalysed reaction is a 1,2-diacyl-sn-glycerol + UDP-alpha-D-glucose = a 1,2-diacyl-3-O-(beta-D-glucopyranosyl)-sn-glycerol + UDP + H(+). Its pathway is glycolipid metabolism; diglucosyl-diacylglycerol biosynthesis. In terms of biological role, processive glucosyltransferase involved in the biosynthesis of both the bilayer- and non-bilayer-forming membrane glucolipids. Is able to successively transfer two glucosyl residues to diacylglycerol (DAG), thereby catalyzing the formation of beta-monoglucosyl-DAG (3-O-(beta-D-glucopyranosyl)-1,2-diacyl-sn-glycerol) and beta-diglucosyl-DAG (3-O-(beta-D-glucopyranosyl-beta-(1-&gt;6)-D-glucopyranosyl)-1,2-diacyl-sn-glycerol). Beta-diglucosyl-DAG is the predominant glycolipid found in Bacillales and is also used as a membrane anchor for lipoteichoic acid (LTA). In Staphylococcus saprophyticus subsp. saprophyticus (strain ATCC 15305 / DSM 20229 / NCIMB 8711 / NCTC 7292 / S-41), this protein is Processive diacylglycerol beta-glucosyltransferase.